Reading from the N-terminus, the 123-residue chain is Histone H2B 2 (123 aa).

A disordered region spans residues 1-32 (MAPPKPSAKGAKKAAKTVTKPKDGKKRRHARK). An O-linked (GlcNAc) serine glycan is attached at S110. A Glycyl lysine isopeptide (Lys-Gly) (interchain with G-Cter in ubiquitin) cross-link involves residue K118.

Belongs to the histone H2B family. As to quaternary structure, the nucleosome is a histone octamer containing two molecules each of H2A, H2B, H3 and H4 assembled in one H3-H4 heterotetramer and two H2A-H2B heterodimers. The octamer wraps approximately 147 bp of DNA. Post-translationally, monoubiquitination of Lys-118 gives a specific tag for epigenetic transcriptional activation and is also prerequisite for histone H3 'Lys-4' and 'Lys-79' methylation. In terms of processing, glcNAcylation at Ser-110 promotes monoubiquitination of Lys-118. It fluctuates in response to extracellular glucose, and associates with transcribed genes.

The protein localises to the nucleus. Its subcellular location is the chromosome. Functionally, core component of nucleosome. Nucleosomes wrap and compact DNA into chromatin, limiting DNA accessibility to the cellular machineries which require DNA as a template. Histones thereby play a central role in transcription regulation, DNA repair, DNA replication and chromosomal stability. DNA accessibility is regulated via a complex set of post-translational modifications of histones, also called histone code, and nucleosome remodeling. This chain is Histone H2B 2 (his-4), found in Caenorhabditis elegans.